The chain runs to 198 residues: Recombination protein RecR (198 aa).

Residues 57–72 (CSVCGHITDQDPCAIC) form a C4-type zinc finger. One can recognise a Toprim domain in the interval 80 to 175 (SLICVVQDPK…RTTRIAHGLP (96 aa)).

It belongs to the RecR family.

May play a role in DNA repair. It seems to be involved in an RecBC-independent recombinational process of DNA repair. It may act with RecF and RecO. This is Recombination protein RecR from Oceanobacillus iheyensis (strain DSM 14371 / CIP 107618 / JCM 11309 / KCTC 3954 / HTE831).